We begin with the raw amino-acid sequence, 393 residues long: Acyltransferase ato1 (393 aa).

Belongs to the lysine N-acyltransferase mbtK family.

Its pathway is siderophore biosynthesis; ferrichrome biosynthesis. Its function is as follows. L-ornithine N(5)-monooxygenase; part of the siderophore biosynthetic pathway. Omphalotus olearius produces ferrichrome A, but no other siderophore has been detected. Ferrichrome A consists of a hexapeptide ring made up of one glycine, two serine, and three N(5)-hydroxyornithine amino acid residues, the latter acylated by trans-(alpha-methyl)-glutaconic acid residues. The biosynthesis of ferrichrome A depends on the hydroxylation of ornithine to N(5)-hydroxyornithine, catalyzed by the monooxygenase omo1. The second step, the acylation of N(5)-hydroxy-L-ornithine is probably catalyzed by the N-acyltransferase ato1. Finally, assembly of ferrichrome A is catalyzed by the nonribosomal peptide synthase (NRPS) fso1. The sequence is that of Acyltransferase ato1 from Omphalotus olearius (Jack o'lantern).